A 279-amino-acid polypeptide reads, in one-letter code: 1-(5-phosphoribosyl)-5-[(5-phosphoribosylamino)methylideneamino] imidazole-4-carboxamide isomerase (279 aa).

This sequence belongs to the HisA/HisF family.

It is found in the cytoplasm. The catalysed reaction is 1-(5-phospho-beta-D-ribosyl)-5-[(5-phospho-beta-D-ribosylamino)methylideneamino]imidazole-4-carboxamide = 5-[(5-phospho-1-deoxy-D-ribulos-1-ylimino)methylamino]-1-(5-phospho-beta-D-ribosyl)imidazole-4-carboxamide. It participates in amino-acid biosynthesis; L-histidine biosynthesis; L-histidine from 5-phospho-alpha-D-ribose 1-diphosphate: step 4/9. This Candida albicans (Yeast) protein is 1-(5-phosphoribosyl)-5-[(5-phosphoribosylamino)methylideneamino] imidazole-4-carboxamide isomerase (HIS6).